A 1197-amino-acid chain; its full sequence is Protein timeless homolog (1197 aa).

Residues 1-309 (MDLYMMNCEL…GLHNLQNYSS (309 aa)) form a required for homodimerization and for interaction with CRY1 and CHEK1 region. Position 281 is a phosphoserine (Ser281). Disordered regions lie at residues 647–674 (STPL…EELQ) and 943–1002 (RKKL…SAEN). Over residues 656-673 (PEEGDAEEEEEEEEEEEL) the composition is skewed to acidic residues. A DNA-binding domain region spans residues 810–949 (SHRAPLWSPE…KKRRKKLAPS (140 aa)). Residues 963-985 (QEDPEEEDEHLPEDESEDEESEE) are compositionally biased toward acidic residues. The span at 986-999 (GLPSGQGQGSSSLS) shows a compositional bias: low complexity. The tract at residues 997-1095 (SLSAENLGES…TQLRRVAASL (99 aa)) is interaction with PARP1. Phosphoserine occurs at positions 1071 and 1084. A required for nuclear localization region spans residues 1079–1197 (IPAKLSSTQL…KRFQIEDEDD (119 aa)). Thr1086 bears the Phosphothreonine mark. Residues 1088-1197 (LRRVAASLSQ…KRFQIEDEDD (110 aa)) form a disordered region. Acidic residues-rich tracts occupy residues 1099-1109 (ENEEEREEEPE) and 1143-1153 (TEEEATGEEEW). Position 1165 is a phosphoserine (Ser1165).

This sequence belongs to the timeless family. In terms of assembly, monomer. Homodimer or homomultimer. Component of the circadian core oscillator, which includes the CRY proteins, CLOCK or NPAS2, ARTNL/BMAL1 or ARTNL2/BMAL2, CSKN1D and/or CSNK1E, TIMELESS, and the PER proteins. Interacts directly with PER2; the interaction with PER2 is via its second PAS domain. Interacts directly with PER1 and PER3. Interacts with CRY1. Interacts with CRY2. Interacts with CHEK1, ATR and ATRIP. Interacts with CLSPN. Interacts (via N-terminus) with TIPIN. The TIMELESS-TIPIN heterodimer binds preferably to guanine-rich quadruplex-forming (G4) DNA structures. Associates with the MCM2-7 complex. Interacts with DNA polymerases alpha, delta and epsilon. Interacts with DDX11; this interaction increases recruitment of both proteins onto chromatin in response to replication stress induction by hydroxyurea. Interacts with PARP1; interaction is direct and independent of poly-ADP-ribose. As to expression, predominantly and robustly expressed in proliferative organs (spleen, thymus, intestine and testis) compared to those more differentiated such as kidney and liver (at protein level). Expressed in all tissues examined including brain, heart, lung, liver, skeletal muscle, kidney, placenta, pancreas, spleen, thymus and testis. Strongly expressed in the suprachiasmatic nucleus (SCN) and pars tuberalis, moderately in the cingulate cortex, pyrimidal cell layer of the piriform cortex, periventricular part of the caudate putamen, and granular layer of the cerebellum, and weakly in the cerebral cortex, gyrus dentatus, hippocampus and thalamic nuclei. In embryonic kidney, expression is highest in regions of active ureteric bud cell branching.

The protein localises to the nucleus. The protein resides in the chromosome. Its function is as follows. Plays an important role in the control of DNA replication, maintenance of replication fork stability, maintenance of genome stability throughout normal DNA replication, DNA repair and in the regulation of the circadian clock. Required to stabilize replication forks during DNA replication by forming a complex with TIPIN: this complex regulates DNA replication processes under both normal and stress conditions, stabilizes replication forks and influences both CHEK1 phosphorylation and the intra-S phase checkpoint in response to genotoxic stress. During DNA replication, inhibits the CMG complex ATPase activity and activates DNA polymerases catalytic activities, coupling DNA unwinding and DNA synthesis. TIMELESS promotes TIPIN nuclear localization. Plays a role in maintaining processive DNA replication past genomic guanine-rich DNA sequences that form G-quadruplex (G4) structures, possibly together with DDX1. Involved in cell survival after DNA damage or replication stress by promoting DNA repair. In response to double-strand breaks (DSBs), accumulates at DNA damage sites and promotes homologous recombination repair via its interaction with PARP1. May be specifically required for the ATR-CHEK1 pathway in the replication checkpoint induced by hydroxyurea or ultraviolet light. Involved in the determination of period length and in the DNA damage-dependent phase advancing of the circadian clock. Negatively regulates CLOCK|NPAS2-ARTNL/BMAL1|ARTNL2/BMAL2-induced transactivation of PER1 possibly via translocation of PER1 into the nucleus. May also play an important role in epithelial cell morphogenesis and formation of branching tubules. In Mus musculus (Mouse), this protein is Protein timeless homolog.